An 862-amino-acid polypeptide reads, in one-letter code: Piwi-like protein 1 (862 aa).

Residues 1–13 (MTGRARARARGRA) show a composition bias toward basic residues. Residues 1-48 (MTGRARARARGRARGQETVQHVGAAASQQPGYIPPRPQQSPTEGDLVG) are disordered. Omega-N-methylarginine; by PRMT5; alternate is present on Arg14. A Symmetric dimethylarginine; by PRMT5; alternate modification is found at Arg14. Omega-N-methylarginine; by PRMT5 is present on Arg49. Residue Arg53 is modified to Omega-N-methylarginine; alternate. Arg53 carries the post-translational modification Symmetric dimethylarginine; alternate. Residues 218–225 (RRLLKIMN) carry the D-box motif. A PAZ domain is found at 279-392 (TVLDFMFNLY…LIPELCYLTG (114 aa)). Residues 317–319 (TYR) form a required for binding 2'-O-methylated 3'-end of piRNAs region. Arg371 is subject to Omega-N-methylarginine; by PRMT5. The MID region stretch occupies residues 480 to 616 (SKETRGAPLI…LQMNCKMGGE (137 aa)). Residues 556–848 (IVVCLLSSNR…LAFLVGQSIH (293 aa)) enclose the Piwi domain. Catalysis depends on residues Asp633, Glu671, Asp703, and His837.

The protein belongs to the argonaute family. Piwi subfamily. In terms of assembly, interacts (via Piwi domain) with DICER1, suggesting that it forms ribonucleoprotein RISC complexes; this interaction is regulated by HSP90AB1 activity. Interacts with MAEL, KIF17, PABPC1, PRMT5 and WDR77. Interacts (when methylated on arginine residues) with TDRD1, TDRKH/TDRD2, RNF17/TDRD4, TDRD6, TDRD7 and TDRD9. Interacts with CLOCK. Interacts with MOV10L1. Interacts with ANAPC10; interaction oly takes place following piRNA-binding. Interacts with RNF8; leading to sequester RNF8 in the cytoplasm. Interacts with Tex19.1 and, probably, Tex19.2. Mg(2+) serves as cofactor. In terms of processing, ubiquitinated by the anaphase promoting complex/cyclosome (APC/C) in late spermatids, leading to its degradation. Ubiquitination only takes place following piRNA-binding in adult testis. Ubiquitination and degradation in late spermatogenesis by APC/C is probably required to release RNF8 from the cytoplasm and promote histone to protamine exchange by RNF8. Post-translationally, arginine methylation by PRMT5 is required for the interaction with Tudor domain-containing protein (TDRD1, TDRKH/TDRD2, RNF17/TDRD4, TDRD6, TDRD7 and TDRD9) and subsequent localization to the meiotic nuage, also named P granule. In terms of tissue distribution, expressed in brain. Expressed in testis, specifically in spermatocytes (at protein level). Only detected in germ lineage cells of adult testis. Expressed in male gonads 2 weeks after birth at the initiation of spermatogenesis, but not expressed in female gonads.

It is found in the cytoplasm. Functionally, endoribonuclease that plays a central role in postnatal germ cells by repressing transposable elements and preventing their mobilization, which is essential for the germline integrity. Acts via the piRNA metabolic process, which mediates the repression of transposable elements during meiosis by forming complexes composed of piRNAs and Piwi proteins and governs the methylation and subsequent repression of transposons. Directly binds methylated piRNAs, a class of 24 to 30 nucleotide RNAs that are generated by a Dicer-independent mechanism and are primarily derived from transposons and other repeated sequence elements. Strongly prefers a uridine in the first position of their guide (g1U preference, also named 1U-bias). Not involved in the piRNA amplification loop, also named ping-pong amplification cycle. Acts as an endoribonuclease that cleaves transposon messenger RNAs. Besides their function in transposable elements repression, piRNAs are probably involved in other processes during meiosis such as translation regulation. Probable component of some RISC complex, which mediates RNA cleavage and translational silencing. Also plays a role in the formation of chromatoid bodies and is required for some miRNAs stability. Required to sequester RNF8 in the cytoplasm until late spermatogenesis; RNF8 being released upon ubiquitination and degradation of PIWIL1. This Mus musculus (Mouse) protein is Piwi-like protein 1.